The primary structure comprises 453 residues: Trigger factor (453 aa).

The PPIase FKBP-type domain occupies 171–256 (GDRVTVSFKG…ATLVEAPKDT (86 aa)).

Belongs to the FKBP-type PPIase family. Tig subfamily.

It localises to the cytoplasm. It carries out the reaction [protein]-peptidylproline (omega=180) = [protein]-peptidylproline (omega=0). Involved in protein export. Acts as a chaperone by maintaining the newly synthesized protein in an open conformation. Functions as a peptidyl-prolyl cis-trans isomerase. The sequence is that of Trigger factor from Rhodopseudomonas palustris (strain BisA53).